The primary structure comprises 1187 residues: Protein CHROMATIN REMODELING 8 (1187 aa).

Positions 1 to 55 are disordered; it reads MEEDEDQFLLSSLGVTSANPEDLEQKILDEATKKPDNDEGGSVEEKSTQLEGTNL. The segment covering 9 to 19 has biased composition (polar residues); that stretch reads LLSSLGVTSAN. Over residues 23–48 the composition is skewed to basic and acidic residues; sequence LEQKILDEATKKPDNDEGGSVEEKST. Positions 110–170 form a coiled coil; it reads LQHALATDRL…LKRKLKEIRK (61 aa). The Nuclear localization signal 1 motif lies at 162 to 169; sequence KRKLKEIR. 2 disordered regions span residues 223–247 and 273–343; these read GFER…DENE and DAED…DGRR. 2 consecutive short sequence motifs (nuclear localization signal) follow at residues 290–297 and 310–317; these read LRKLYKTP and GKKSKKTR. The span at 305 to 328 shows a compositional bias: basic residues; it reads KKRKAGKKSKKTRPLPEKKWRKRI. Positions 397 to 594 constitute a Helicase ATP-binding domain; the sequence is WELHCQRAGG…WSLFDFVFPG (198 aa). 410–417 serves as a coordination point for ATP; it reads DEMGLGKT. The tract at residues 467 to 501 is disordered; sequence SAQDSGHGKGQGKASESDYDSESSVDSDHEPKSKN. Residues 492–501 are compositionally biased toward basic and acidic residues; that stretch reads DSDHEPKSKN. The short motif at 545-548 is the DEGH box element; sequence DEGH. The region spanning 730-890 is the Helicase C-terminal domain; it reads KVVAEVLKVW…RRFFKARDMK (161 aa). The stretch at 987–1016 forms a coiled coil; the sequence is NANDEEEKMRLEHQASQVAQRAAEALRQSR. A compositionally biased stretch (polar residues) spans 1050 to 1059; sequence VNSRLTQTGD. Residues 1050–1075 are disordered; it reads VNSRLTQTGDKPSAIKNGISAGLSSG.

This sequence belongs to the SNF2/RAD54 helicase family. Homodimer. Binds DNA.

It localises to the nucleus. Essential factor involved in transcription-coupled nucleotide excision repair (TCR) which allows RNA polymerase II-blocking lesions to be rapidly removed from the transcribed strand of active genes. Upon DNA-binding, it locally modifies DNA conformation by wrapping the DNA around itself, thereby modifying the interface between stalled RNA polymerase II and DNA. It is required for transcription-coupled repair complex formation. In Arabidopsis thaliana (Mouse-ear cress), this protein is Protein CHROMATIN REMODELING 8.